The chain runs to 356 residues: Ion-translocating oxidoreductase complex subunit D (356 aa).

4 helical membrane-spanning segments follow: residues 20–40 (LMLLVVYATIPGMFTMTWFFG), 42–62 (GVLVNVLLASISCMLFEALAI), 68–88 (PVGFYLRDFSALVTGVLIGVS), and 117–137 (GFNPFNPAMVAYALLLVSFPV). An FMN phosphoryl threonine modification is found at threonine 177. Transmembrane regions (helical) follow at residues 205–225 (WASAGWEWVNIAFLFGGLYLL), 229–249 (VYTWHAPVSMLLALALMAALF), 259–279 (GSPLFHLLTGATMLGAFFIVT), 292–312 (VIYGALIGMLVYVIRTWGSSY), and 315–335 (GVAFAVLLMNFAAPFIDYYTT).

The protein belongs to the NqrB/RnfD family. As to quaternary structure, the complex is composed of six subunits: RnfA, RnfB, RnfC, RnfD, RnfE and RnfG. FMN serves as cofactor.

It localises to the cell inner membrane. In terms of biological role, part of a membrane-bound complex that couples electron transfer with translocation of ions across the membrane. This chain is Ion-translocating oxidoreductase complex subunit D, found in Cellvibrio japonicus (strain Ueda107) (Pseudomonas fluorescens subsp. cellulosa).